The following is a 213-amino-acid chain: Thiamine-phosphate synthase (213 aa).

Residues 39–43 (QLREK) and asparagine 71 each bind 4-amino-2-methyl-5-(diphosphooxymethyl)pyrimidine. 2 residues coordinate Mg(2+): aspartate 72 and aspartate 91. Residue serine 110 participates in 4-amino-2-methyl-5-(diphosphooxymethyl)pyrimidine binding. Position 136–138 (136–138 (TGT)) interacts with 2-[(2R,5Z)-2-carboxy-4-methylthiazol-5(2H)-ylidene]ethyl phosphate. Lysine 139 contributes to the 4-amino-2-methyl-5-(diphosphooxymethyl)pyrimidine binding site. 2-[(2R,5Z)-2-carboxy-4-methylthiazol-5(2H)-ylidene]ethyl phosphate is bound by residues glycine 166 and 186 to 187 (VS).

It belongs to the thiamine-phosphate synthase family. Mg(2+) serves as cofactor.

It catalyses the reaction 2-[(2R,5Z)-2-carboxy-4-methylthiazol-5(2H)-ylidene]ethyl phosphate + 4-amino-2-methyl-5-(diphosphooxymethyl)pyrimidine + 2 H(+) = thiamine phosphate + CO2 + diphosphate. It carries out the reaction 2-(2-carboxy-4-methylthiazol-5-yl)ethyl phosphate + 4-amino-2-methyl-5-(diphosphooxymethyl)pyrimidine + 2 H(+) = thiamine phosphate + CO2 + diphosphate. The enzyme catalyses 4-methyl-5-(2-phosphooxyethyl)-thiazole + 4-amino-2-methyl-5-(diphosphooxymethyl)pyrimidine + H(+) = thiamine phosphate + diphosphate. It functions in the pathway cofactor biosynthesis; thiamine diphosphate biosynthesis; thiamine phosphate from 4-amino-2-methyl-5-diphosphomethylpyrimidine and 4-methyl-5-(2-phosphoethyl)-thiazole: step 1/1. Functionally, condenses 4-methyl-5-(beta-hydroxyethyl)thiazole monophosphate (THZ-P) and 2-methyl-4-amino-5-hydroxymethyl pyrimidine pyrophosphate (HMP-PP) to form thiamine monophosphate (TMP). In Clostridium botulinum (strain Eklund 17B / Type B), this protein is Thiamine-phosphate synthase.